A 370-amino-acid chain; its full sequence is BRISC and BRCA1-A complex member 1 (370 aa).

Disordered regions lie at residues 1–69 (METT…SPPV) and 90–126 (TTNT…ELHL). A compositionally biased stretch (basic and acidic residues) spans 11 to 20 (GEERMMDLRP). Residues 35-45 (STGSLNSSLPS) show a composition bias toward low complexity. Residues 137–340 (VIICLDLSEE…IELHNCMAKL (204 aa)) form a VWFA-like region.

Belongs to the BABAM1 family. As to quaternary structure, component of the ARISC complex, at least composed of uimc1/rap80, abraxas1, brcc3/brcc36, babam2 and babam1/nba1. Component of the BRCA1-A complex, at least composed of bard1, uimc1/rap80, abraxas1, brcc3/brcc36, babam2 and babam1/nba1. In the BRCA1-A complex, interacts directly with abraxas1 and babam2. Component of the BRISC complex, at least composed of abraxas2, brcc3/brcc36, babam2 and babam1/nba1.

It localises to the cytoplasm. Its subcellular location is the nucleus. Its function is as follows. Component of the BRCA1-A complex, a complex that specifically recognizes 'Lys-63'-linked ubiquitinated histones H2A and H2AX at DNA lesion sites. The BRCA1-A complex also possesses deubiquitinase activity that specifically removes 'Lys-63'-linked ubiquitin on histones H2A and H2AX. In the BRCA1-A complex, it is required for the complex integrity and its localization at DNA double-strand breaks (DSBs). Component of the BRISC complex, a multiprotein complex that specifically cleaves 'Lys-63'-linked ubiquitin in various substrates. In these 2 complexes, it is probably required to maintain the stability of babam2 and help the 'Lys-63'-linked deubiquitinase activity mediated by brcc3/brcc36 component. The BRISC complex is required for normal mitotic spindle assembly and microtubule attachment to kinetochores via its role in deubiquitinating numa1. In Danio rerio (Zebrafish), this protein is BRISC and BRCA1-A complex member 1 (babam1).